A 989-amino-acid chain; its full sequence is R3H domain-containing protein 2 (989 aa).

2 disordered regions span residues 23–71 (EESV…AKSN) and 106–147 (SCPS…QEYT). Positions 36–56 (PSKEEIEKESEDTSLRQETQR) are enriched in basic and acidic residues. S37 carries the post-translational modification Phosphoserine. Residues 58 to 71 (TSNHGHARKRAKSN) are compositionally biased toward basic residues. Basic and acidic residues predominate over residues 109 to 143 (SDKEEEKSTKDVSEKEDKDKNKEKVPRRMLSRDSS). S143 is subject to Phosphoserine. An R3H domain is found at 169–232 (RMMLLKLEQE…AVIINKTSNT (64 aa)). In terms of domain architecture, SUZ spans 233-303 (RIPEQRFSEH…VRERIFARET (71 aa)). Disordered stretches follow at residues 267–288 (DDNQ…EERE), 306–390 (NGYL…ISRP), 416–479 (TAQQ…FQPP), 493–524 (ASTG…GYMQ), 674–738 (GTSP…PSMV), 751–793 (RGQK…SLSN), and 848–867 (QGQS…LKSA). Residues 277 to 288 (DGRRSKSIEERE) are compositionally biased toward basic and acidic residues. Positions 320 to 331 (SRTSSSRQSSTD) are enriched in low complexity. S344, S347, and S363 each carry phosphoserine. Low complexity predominate over residues 416-428 (TAQQQQQQQQQLP). Polar residues-rich tracts occupy residues 454–466 (PFGQ…QGST) and 493–517 (ASTG…QQVL). The segment covering 695–704 (SPSPCSPPQM) has biased composition (pro residues). Low complexity predominate over residues 705–727 (PQQYSGVSPSGPGVVVMQLNVPN). The segment covering 761–771 (PESSPQANTQM) has biased composition (polar residues). Over residues 772 to 790 (SSSPVTSPTQSPAPSPVTS) the composition is skewed to low complexity. Phosphoserine is present on residues S866 and S868. T869 and T873 each carry phosphothreonine.

It is found in the nucleus. In Bos taurus (Bovine), this protein is R3H domain-containing protein 2 (R3HDM2).